The chain runs to 290 residues: 33 kDa chaperonin (290 aa).

2 disulfides stabilise this stretch: Cys-235/Cys-237 and Cys-268/Cys-271.

This sequence belongs to the HSP33 family. Under oxidizing conditions two disulfide bonds are formed involving the reactive cysteines. Under reducing conditions zinc is bound to the reactive cysteines and the protein is inactive.

The protein resides in the cytoplasm. Its function is as follows. Redox regulated molecular chaperone. Protects both thermally unfolding and oxidatively damaged proteins from irreversible aggregation. Plays an important role in the bacterial defense system toward oxidative stress. This is 33 kDa chaperonin from Streptococcus pyogenes serotype M3 (strain ATCC BAA-595 / MGAS315).